Consider the following 220-residue polypeptide: 7-cyano-7-deazaguanine synthase (220 aa).

10 to 20 (FSGGQDSTTCL) lines the ATP pocket. Zn(2+) contacts are provided by Cys186, Cys195, Cys198, and Cys201.

Belongs to the QueC family. Homodimer. It depends on Zn(2+) as a cofactor.

It carries out the reaction 7-carboxy-7-deazaguanine + NH4(+) + ATP = 7-cyano-7-deazaguanine + ADP + phosphate + H2O + H(+). It functions in the pathway purine metabolism; 7-cyano-7-deazaguanine biosynthesis. In terms of biological role, catalyzes the ATP-dependent conversion of 7-carboxy-7-deazaguanine (CDG) to 7-cyano-7-deazaguanine (preQ(0)). This chain is 7-cyano-7-deazaguanine synthase, found in Bacillus cereus (strain G9842).